Reading from the N-terminus, the 149-residue chain is L-alanine exporter AlaE (149 aa).

4 helical membrane-spanning segments follow: residues 16–36 (FAMVVYCSVVNMCIEVFLSGM), 46–66 (LVAIPVNILIAWPYGMYRDLF), 85–105 (ILAYVTFQSPVYVAILLVVGA), and 112–132 (AAVSSNIVVSMLMGAVYGYFL).

This sequence belongs to the AlaE exporter family.

The protein localises to the cell inner membrane. Exports L-alanine. The chain is L-alanine exporter AlaE from Shigella flexneri.